Consider the following 249-residue polypeptide: CDP-diacylglycerol pyrophosphatase (249 aa).

The helical transmembrane segment at 7–27 threads the bilayer; that stretch reads FLLAVVIVAAVAGIGYWKLAA.

This sequence belongs to the Cdh family.

The protein localises to the cell inner membrane. It catalyses the reaction a CDP-1,2-diacyl-sn-glycerol + H2O = a 1,2-diacyl-sn-glycero-3-phosphate + CMP + 2 H(+). It functions in the pathway phospholipid metabolism; CDP-diacylglycerol degradation; phosphatidate from CDP-diacylglycerol: step 1/1. In Citrobacter koseri (strain ATCC BAA-895 / CDC 4225-83 / SGSC4696), this protein is CDP-diacylglycerol pyrophosphatase.